The following is a 319-amino-acid chain: MARKKITLVGAGNIGGTLAHLALIKQLGDVVLFDIAQGMPNGKALDLLQTCPIEGVDFKVRGTNDYKDLENSDVVIVTAGVPRKPGMSRDDLLGINIKVMQTVGEGIKHNCPNAFVICITNPLDIMVNMLQKFSGVPDNKIVGMAGVLDSARFRTFLADELNVSVQQVQAYVMGGHGDTMVPLTKMSNVAGVSLEQLVKEGKLKQERLDAIVSRTRSGGGEIVALLKTGSAYYAPAAAGIQMAESFLKDKKMILPCAAKVKAGMYGLDEDLFVGVPTEISANGVRPIEVEISDKEREQLQVSINAIKDLNKAAAEILAK.

NAD(+)-binding positions include 10–15 and Asp-34; that span reads GAGNIG. Substrate is bound by residues Arg-83 and Arg-89. NAD(+)-binding positions include Asn-96 and 119–121; that span reads ITN. 2 residues coordinate substrate: Asn-121 and Arg-152. His-176 serves as the catalytic Proton acceptor.

Belongs to the LDH/MDH superfamily. MDH type 3 family.

It catalyses the reaction (S)-malate + NAD(+) = oxaloacetate + NADH + H(+). Catalyzes the reversible oxidation of malate to oxaloacetate. The polypeptide is Malate dehydrogenase (Francisella tularensis subsp. tularensis (strain FSC 198)).